A 637-amino-acid chain; its full sequence is Biosynthetic arginine decarboxylase (637 aa).

An N6-(pyridoxal phosphate)lysine modification is found at Lys-101. Phe-286–Tyr-296 serves as a coordination point for substrate.

The protein belongs to the Orn/Lys/Arg decarboxylase class-II family. SpeA subfamily. The cofactor is Mg(2+). Requires pyridoxal 5'-phosphate as cofactor.

It carries out the reaction L-arginine + H(+) = agmatine + CO2. Its pathway is amine and polyamine biosynthesis; agmatine biosynthesis; agmatine from L-arginine: step 1/1. Its function is as follows. Catalyzes the biosynthesis of agmatine from arginine. This chain is Biosynthetic arginine decarboxylase, found in Shewanella sediminis (strain HAW-EB3).